Consider the following 79-residue polypeptide: Small ribosomal subunit protein bS16 (79 aa).

This sequence belongs to the bacterial ribosomal protein bS16 family.

The polypeptide is Small ribosomal subunit protein bS16 (Marinobacter nauticus (strain ATCC 700491 / DSM 11845 / VT8) (Marinobacter aquaeolei)).